Reading from the N-terminus, the 242-residue chain is Protein HTATIP2 (242 aa).

Position 2 is an N-acetylalanine (Ala2). The tract at residues 2–25 (AETEALSKLREDFRMQNKSVFILG) is required for interaction with elongation factor EEF1A1. Residues Ser27, Gly28, Glu29, Thr30, Arg52, Arg53, Leu92, Gly93, Tyr143, Lys147, Leu170, and Arg178 each coordinate NADPH. The Proton acceptor role is filled by Tyr143. Lys147 is a catalytic residue.

As to quaternary structure, monomer. Forms homodimers during oxidative stress. Interacts (via N-terminus) with elongation factor EEF1A1 (via middle-region); the interaction is direct and competes with EEF1A1 binding to guanyl-nucleotide exchange factor EEF1B2, thereby inhibiting GDP for GTP exchange and reactivation of EEF1A1. Interacts with nuclear transport receptors XPO4, IPO5/RANBP5, IPO7, IPO9 and KPNB1 as well as GCN1L1/GCN1 and LRPPRC probably through their HEAT repeats. Binds NCOA5/CIA. In terms of assembly, interacts (via N-terminus) with proteasome subunit PSMD4/s5a. (Microbial infection) Interacts with HIV-1 Tat (via activation domain). In terms of tissue distribution, high levels in liver, lung, skeletal muscle, pancreas and placenta. Moderate levels in heart and kidney. Low levels in brain. Not expressed or low levels in variant small cell lung carcinomas, 33% of hepatocellular carcinomas and neuroblastomas. Levels are reduced in the heart of patients with hypertrophic cardiomyopathy and failing hearts.

It is found in the cytoplasm. In terms of biological role, represses translation by preventing reactivation of elongation factor eEF1A. May also inhibit nuclear import by competing with nuclear import substrates for binding to a subset of nuclear transport receptors. Has additionally been proposed to act as a redox sensor involved in cellular oxidative stress surveillance. This Homo sapiens (Human) protein is Protein HTATIP2.